Consider the following 359-residue polypeptide: 3-dehydroquinate synthase (359 aa).

NAD(+)-binding positions include 70 to 75 (DGEQYK), 105 to 109 (GVIGD), 129 to 130 (TT), Lys142, Lys151, and 169 to 172 (FYKT). 3 residues coordinate Zn(2+): Glu184, His247, and His264.

This sequence belongs to the sugar phosphate cyclases superfamily. Dehydroquinate synthase family. Co(2+) is required as a cofactor. Zn(2+) serves as cofactor. The cofactor is NAD(+).

Its subcellular location is the cytoplasm. The catalysed reaction is 7-phospho-2-dehydro-3-deoxy-D-arabino-heptonate = 3-dehydroquinate + phosphate. The protein operates within metabolic intermediate biosynthesis; chorismate biosynthesis; chorismate from D-erythrose 4-phosphate and phosphoenolpyruvate: step 2/7. Functionally, catalyzes the conversion of 3-deoxy-D-arabino-heptulosonate 7-phosphate (DAHP) to dehydroquinate (DHQ). In Francisella tularensis subsp. holarctica (strain OSU18), this protein is 3-dehydroquinate synthase.